A 276-amino-acid chain; its full sequence is Secretagogin (276 aa).

6 consecutive EF-hand domains span residues 12-47 (LDAA…VLTK), 58-93 (NVWK…EDEN), 105-140 (DSSV…LFLH), 149-184 (KLEE…QENF), 197-232 (ERKR…MMEL), and 240-276 (VDLD…KINP). 23 residues coordinate Ca(2+): Asp-71, Ser-73, Asp-75, His-77, Glu-82, Asp-118, Asp-120, Ser-122, Glu-129, Asp-162, Asn-164, Asp-166, Arg-168, Asp-173, Asp-210, Ser-212, Thr-214, Glu-221, Asp-254, Asn-256, Asp-258, Lys-260, and Glu-265.

The protein localises to the cytoplasm. It localises to the secreted. It is found in the cytoplasmic vesicle. Its subcellular location is the secretory vesicle membrane. The protein is Secretagogin (SCGN) of Sus scrofa (Pig).